A 539-amino-acid polypeptide reads, in one-letter code: Beta-apo-4'-carotenal oxygenase (539 aa).

Residues glutamate 228 and cysteine 262 contribute to the active site.

The protein belongs to the aldehyde dehydrogenase family.

The enzyme catalyses 4'-apo-beta-carotenal + NAD(+) + H2O = neurosporaxanthin + NADH + 2 H(+). Beta-apo-4'-carotenal oxygenase involved in the last step of synthesis of neurosporaxanthin, a carboxylic apocarotenoid acting as an essential protective pigments and leading to orange pigmentation. Converts the aldehyde beta-apo-4'-carotenal into neurosporaxanthin. Is also able to use shorter apocarotenals as substrates (such as beta-apo-8'-carotenal (C30), beta-apo-10'-carotenal (C27), or the acyclic apocarotenal apo-8'-lycopenal (C30)), indicating wide substrate specificity. Neurosporaxanthin is synthesized from geranyl-geranyl pyrophosphate (GGPP) through several enzymatic activities. Phytoene synthase activity performed by the bifunctional enzyme carAR first produces phytoene from geranyl-geranyl pyrophosphate (GGPP). The phytoene dehydrogenase carB then introduces 4 desaturations to lead to lycopene which is substrate of the carotene cyclase activity of carAR that leads to the production of gamma-carotene. CarB then performs a 5th desaturation reaction to yield torulene. Torulene is the substrate of the dioxidase carT that breaks the molecule, removing five carbon atoms to yield beta-apo-4'-carotenal, whereas the aldehyde dehydrogenase carD mediates the last step by converting beta-apo-4'-carotenal into neurosporaxanthin. The chain is Beta-apo-4'-carotenal oxygenase from Gibberella fujikuroi (strain CBS 195.34 / IMI 58289 / NRRL A-6831) (Bakanae and foot rot disease fungus).